A 24-amino-acid polypeptide reads, in one-letter code: U1-poneritoxin-Na1a (24 aa).

It belongs to the non-disulfide-bridged peptide (NDBP) superfamily. Medium-length antimicrobial peptide (group 3) family. Ponericin-W subfamily. Expressed by the venom gland.

Its subcellular location is the secreted. It localises to the target cell membrane. Functionally, has a broad spectrum of activity against both Gram-positive and Gram-negative bacteria and S.cerevisiae. Has insecticidal and hemolytic activities. May act by disrupting the integrity of the bacterial cell membrane. This Neoponera apicalis (Ant) protein is U1-poneritoxin-Na1a.